We begin with the raw amino-acid sequence, 253 residues long: Sporulated oocyst TA4 antigen (253 aa).

The N-terminal stretch at 1–23 (MARLSFVSLLSLSLLFGQQAVRA) is a signal peptide. Residues 182-184 (RRL) constitute a propeptide, removed in mature form.

As to quaternary structure, the TA4 antigen is composed of a 17 kDa and a 8 kDa chain, linked by a disulfide bond.

The sequence is that of Sporulated oocyst TA4 antigen from Eimeria tenella (Coccidian parasite).